Here is a 267-residue protein sequence, read N- to C-terminus: Phosphate import ATP-binding protein PstB 2 (267 aa).

The 242-residue stretch at 21 to 262 (LSTKDVHVYY…AKLQSTNDYV (242 aa)) folds into the ABC transporter domain. Position 53–60 (53–60 (GPSGSGKS)) interacts with ATP.

This sequence belongs to the ABC transporter superfamily. Phosphate importer (TC 3.A.1.7) family. As to quaternary structure, the complex is composed of two ATP-binding proteins (PstB), two transmembrane proteins (PstC and PstA) and a solute-binding protein (PstS).

The protein resides in the cell membrane. It catalyses the reaction phosphate(out) + ATP + H2O = ADP + 2 phosphate(in) + H(+). Its function is as follows. Part of the ABC transporter complex PstSACB involved in phosphate import. Responsible for energy coupling to the transport system. The polypeptide is Phosphate import ATP-binding protein PstB 2 (Streptococcus pneumoniae (strain ATCC BAA-255 / R6)).